The chain runs to 187 residues: ATP synthase subunit b, chloroplastic (187 aa).

The helical transmembrane segment at 29 to 49 (LAVVLGVLIYLGKGVCAGCIL) threads the bilayer.

Belongs to the ATPase B chain family. As to quaternary structure, F-type ATPases have 2 components, F(1) - the catalytic core - and F(0) - the membrane proton channel. F(1) has five subunits: alpha(3), beta(3), gamma(1), delta(1), epsilon(1). F(0) has four main subunits: a(1), b(1), b'(1) and c(10-14). The alpha and beta chains form an alternating ring which encloses part of the gamma chain. F(1) is attached to F(0) by a central stalk formed by the gamma and epsilon chains, while a peripheral stalk is formed by the delta, b and b' chains.

The protein localises to the plastid. It is found in the chloroplast thylakoid membrane. Functionally, f(1)F(0) ATP synthase produces ATP from ADP in the presence of a proton or sodium gradient. F-type ATPases consist of two structural domains, F(1) containing the extramembraneous catalytic core and F(0) containing the membrane proton channel, linked together by a central stalk and a peripheral stalk. During catalysis, ATP synthesis in the catalytic domain of F(1) is coupled via a rotary mechanism of the central stalk subunits to proton translocation. In terms of biological role, component of the F(0) channel, it forms part of the peripheral stalk, linking F(1) to F(0). This chain is ATP synthase subunit b, chloroplastic, found in Angiopteris evecta (Mule's foot fern).